The primary structure comprises 20 residues: EDSLSDWERVYLPIDPGVVL.

Belongs to the Ycf48 family.

Its subcellular location is the plastid. It localises to the chloroplast thylakoid lumen. Essential for photosystem II (PSII) biogenesis; required for assembly of an early intermediate in PSII assembly that includes D2 (psbD) and cytochrome b559. The sequence is that of Photosystem II stability/assembly factor HCF136, chloroplastic from Spinacia oleracea (Spinach).